A 290-amino-acid polypeptide reads, in one-letter code: MIFAKGHGTQNDFVLLPDVAARLSLTAAQVAALCDRRRGLGADGILRVTTADAAVAAGVLHRLPDGVSPGDWYMDYRNADGSTAQMCGNGVRVFAHYLRASGLETRDEFVVGSLAGPRPVTVHHADQTHADVTVDMGKANKLGPGEAVVGGRRLSGVAVDVGNPHLACLDPGLTPEQLAALDVGAPVSFDHAQFPEGVNVEVLTARAAGVVCMRVHERGVGETRSCGTGTVAAAVAALASAGQETGTLTVRIPGGDVTVNITDATSLLRGPSVLVASGEISEEWWRDQRR.

Substrate contacts are provided by asparagine 11 and asparagine 78. Cysteine 87 functions as the Proton donor in the catalytic mechanism. Residues 88 to 89 (GN), asparagine 163, asparagine 199, and 217 to 218 (ER) contribute to the substrate site. Residue cysteine 226 is the Proton acceptor of the active site. 227–228 (GT) provides a ligand contact to substrate.

This sequence belongs to the diaminopimelate epimerase family. In terms of assembly, homodimer.

Its subcellular location is the cytoplasm. The enzyme catalyses (2S,6S)-2,6-diaminopimelate = meso-2,6-diaminopimelate. It functions in the pathway amino-acid biosynthesis; L-lysine biosynthesis via DAP pathway; DL-2,6-diaminopimelate from LL-2,6-diaminopimelate: step 1/1. Catalyzes the stereoinversion of LL-2,6-diaminopimelate (L,L-DAP) to meso-diaminopimelate (meso-DAP), a precursor of L-lysine and an essential component of the bacterial peptidoglycan. In Mycobacterium ulcerans (strain Agy99), this protein is Diaminopimelate epimerase.